Reading from the N-terminus, the 364-residue chain is Medium-wave-sensitive opsin 1 (364 aa).

Residues 1–52 (MAQRWGPHALSGVQAQDAYEDSTQASLFTYTNSNNTRGPFEGPNYHIAPRWV) lie on the Extracellular side of the membrane. The required for 11-cis-retinal regeneration stretch occupies residues 17-43 (DAYEDSTQASLFTYTNSNNTRGPFEGP). A glycan (N-linked (GlcNAc...) asparagine) is linked at N34. Residues 53-77 (YHLTSAWMTIVVIASIFTNGLVLVA) traverse the membrane as a helical segment. The Cytoplasmic segment spans residues 78-89 (TMRFKKLRHPLN). A helical membrane pass occupies residues 90 to 115 (WILVNLAVADLAETVIASTISVVNQV). Topologically, residues 116-129 (YGYFVLGHPLCVVE) are extracellular. Residues C126 and C203 are joined by a disulfide bond. The chain crosses the membrane as a helical span at residues 130-149 (GYTVSLCGITGLWSLAIISW). At 150–168 (ERWLVVCKPFGNVRFDAKL) the chain is on the cytoplasmic side. The chain crosses the membrane as a helical span at residues 169–192 (AIVGIVFSWVWSAVWTAPPIFGWS). Topologically, residues 193–218 (RYWPYGLKTSCGPDVFSGTSYPGVQS) are extracellular. Residues 219–246 (YMMVLMVTCCITPLSIIVLCYLHVWLAI) form a helical membrane-spanning segment. Residues 247–268 (RAVAKQQKESESTQKAEKEVTR) lie on the Cytoplasmic side of the membrane. The chain crosses the membrane as a helical span at residues 269 to 292 (MVVVMVLAYCLCWGPYAFFACFAT). The Extracellular segment spans residues 293–300 (ANPGYSFH). Residues 301-325 (PLVAALPAYFAKSATIYNPIIYVFM) form a helical membrane-spanning segment. N6-(retinylidene)lysine is present on K312. Topologically, residues 326 to 364 (NRQFRNCILQLFGKKVEDSSELSSTSRTEASSVSSVSPA) are cytoplasmic.

Belongs to the G-protein coupled receptor 1 family. Opsin subfamily. As to quaternary structure, monomer. Homodimer. Homotetramer. O-glycosylated. Post-translationally, phosphorylated on some or all of the serine and threonine residues present in the C-terminal region. Expressed in cone photoreceptor cells.

The protein localises to the membrane. Visual pigments are the light-absorbing molecules that mediate vision. They consist of an apoprotein, opsin, covalently linked to cis-retinal. May increase spectral sensitivity in dim light. This chain is Medium-wave-sensitive opsin 1 (OPN1MW), found in Cavia porcellus (Guinea pig).